A 347-amino-acid chain; its full sequence is D-alanine--D-alanine ligase (347 aa).

In terms of domain architecture, ATP-grasp spans Lys-131–Asp-333. Residue Glu-161–Glu-216 participates in ATP binding. The Mg(2+) site is built by Asp-287, Glu-300, and Asn-302.

Belongs to the D-alanine--D-alanine ligase family. Requires Mg(2+) as cofactor. Mn(2+) serves as cofactor.

The protein localises to the cytoplasm. The enzyme catalyses 2 D-alanine + ATP = D-alanyl-D-alanine + ADP + phosphate + H(+). The protein operates within cell wall biogenesis; peptidoglycan biosynthesis. In terms of biological role, cell wall formation. The sequence is that of D-alanine--D-alanine ligase from Streptococcus pneumoniae (strain JJA).